The sequence spans 596 residues: Ran GTPase-activating protein (596 aa).

LRR repeat units lie at residues Gln-44–Arg-71, Gly-107–Ser-134, Cys-137–Asp-164, Leu-203–His-230, Asn-231–Phe-258, and Leu-259–Arg-286. A disordered region spans residues His-355–Ala-418. A compositionally biased stretch (acidic residues) spans Thr-387–Tyr-410. Thr-433 and Thr-434 each carry phosphothreonine. A Phosphoserine modification is found at Ser-436.

Belongs to the RNA1 family. Forms a complex with Nup358/RanBP2, sbr/Nxf1 and Nxt1. Associates with the nuclear pore complex via its interaction with Nup358/RanBP2. In terms of tissue distribution, both full-length and truncated protein are expressed in testis (at protein level). Expressed in oocytes and nurse cells (at protein level).

It localises to the cytoplasm. Its subcellular location is the nucleus membrane. GTPase activator for the nuclear Ras-related regulatory protein Ran, converting it to the putatively inactive GDP-bound state. Trans-acting factor necessary for meiotic distortion. Distortion is only seen in individuals that carry the RanGAP tandem duplication and express a RanGAP truncated protein. Binding of truncated RanGAP product to the Responder(RSP) locus initiates events that lead to sperm dysfunction. During oogenesis, plays a role in the biogenesis of annulate lamellae containing nuclear pore complex components. This Drosophila melanogaster (Fruit fly) protein is Ran GTPase-activating protein (RanGAP).